Reading from the N-terminus, the 110-residue chain is uncharacterized protein (110 aa).

The helical transmembrane segment at 29-49 threads the bilayer; the sequence is GLAFIFFFLVAFYFFPAFWDL.

It localises to the membrane. This is an uncharacterized protein from Saccharomyces cerevisiae (strain ATCC 204508 / S288c) (Baker's yeast).